Reading from the N-terminus, the 167-residue chain is Dihydrofolate reductase (167 aa).

One can recognise a DHFR domain in the interval 1–162 (MFISMWAQDK…YPHRFQKWQK (162 aa)). Residues alanine 7 and 13 to 19 (LIGKDGL) each bind NADP(+). Aspartate 27 provides a ligand contact to substrate. NADP(+) is bound at residue 45-46 (KT). Residue arginine 58 participates in substrate binding. Residues 64-65 (TT) and 99-106 (GGSRIFQA) contribute to the NADP(+) site. Threonine 117 provides a ligand contact to substrate.

The protein belongs to the dihydrofolate reductase family.

The enzyme catalyses (6S)-5,6,7,8-tetrahydrofolate + NADP(+) = 7,8-dihydrofolate + NADPH + H(+). It participates in cofactor biosynthesis; tetrahydrofolate biosynthesis; 5,6,7,8-tetrahydrofolate from 7,8-dihydrofolate: step 1/1. Key enzyme in folate metabolism. Catalyzes an essential reaction for de novo glycine and purine synthesis, and for DNA precursor synthesis. This is Dihydrofolate reductase (folA) from Enterococcus faecium (Streptococcus faecium).